The following is a 94-amino-acid chain: FLLKSQLCYCLFGIELIGAGIHALHEDEIFTVDYCGTNCTKQSNGSWTTCPGNCSCYHEDGKTDGFCLSTEYTDFTQFPNLTSEEMDAATPRPE.

3 disulfides stabilise this stretch: Cys35/Cys54, Cys39/Cys56, and Cys50/Cys67. N-linked (GlcNAc...) asparagine glycans are attached at residues Asn38, Asn44, Asn53, and Asn80.

Its subcellular location is the secreted. Functionally, salivary chemokine-binding protein which binds to host chemokines CXCL1, CXCL2, CXCL5 and CXCL8. The chain is Evasin P1172 from Ixodes ricinus (Common tick).